The sequence spans 78 residues: Acyl carrier protein (78 aa).

The region spanning 2-77 is the Carrier domain; sequence SDIADRVKKI…DAIKFLEKNS (76 aa). Serine 37 bears the O-(pantetheine 4'-phosphoryl)serine mark.

The protein belongs to the acyl carrier protein (ACP) family. Post-translationally, 4'-phosphopantetheine is transferred from CoA to a specific serine of apo-ACP by AcpS. This modification is essential for activity because fatty acids are bound in thioester linkage to the sulfhydryl of the prosthetic group.

It localises to the cytoplasm. It functions in the pathway lipid metabolism; fatty acid biosynthesis. Functionally, carrier of the growing fatty acid chain in fatty acid biosynthesis. The sequence is that of Acyl carrier protein from Methylobacterium sp. (strain 4-46).